A 123-amino-acid chain; its full sequence is Small ribosomal subunit protein uS11 (123 aa).

This sequence belongs to the universal ribosomal protein uS11 family. As to quaternary structure, part of the 30S ribosomal subunit. Interacts with proteins S7 and S18. Binds to IF-3.

Its function is as follows. Located on the platform of the 30S subunit, it bridges several disparate RNA helices of the 16S rRNA. Forms part of the Shine-Dalgarno cleft in the 70S ribosome. The polypeptide is Small ribosomal subunit protein uS11 (Coxiella burnetii (strain CbuK_Q154) (Coxiella burnetii (strain Q154))).